The primary structure comprises 221 residues: Casparian strip membrane protein 2 (221 aa).

Residues 1 to 21 (MEKSEATTIEIGETSRESKGK) are disordered. At 1-41 (MEKSEATTIEIGETSRESKGKTPLLAEVEQTARTAGSYRRG) the chain is on the cytoplasmic side. The helical transmembrane segment at 42-62 (VAIFDLILRVSAATSALAATI) threads the bilayer. Over 63-89 (TMGTTEQTLPFFTQFFQFQASYDDLPA) the chain is Extracellular. The helical transmembrane segment at 90–110 (FTFFVIALSIVTGYLVLSVPF) threads the bilayer. Topologically, residues 111–131 (SVVCIAQPLAAVPRLLLIVCD) are cytoplasmic. The chain crosses the membrane as a helical span at residues 132 to 152 (TLTVTLATAAASSSAAIVYLA). Residues 153–221 (HNGNADANWL…HYWDRRWCEI (69 aa)) lie on the Extracellular side of the membrane.

Belongs to the Casparian strip membrane proteins (CASP) family. In terms of assembly, homodimer and heterodimers.

It is found in the cell membrane. Its function is as follows. Regulates membrane-cell wall junctions and localized cell wall deposition. Required for establishment of the Casparian strip membrane domain (CSD) and the subsequent formation of Casparian strips, a cell wall modification of the root endodermis that determines an apoplastic barrier between the intraorganismal apoplasm and the extraorganismal apoplasm and prevents lateral diffusion. The chain is Casparian strip membrane protein 2 from Erythranthe guttata (Yellow monkey flower).